A 361-amino-acid polypeptide reads, in one-letter code: DNA replication and repair protein RecF (361 aa).

ATP is bound at residue 30-37 (GANGSGKT).

This sequence belongs to the RecF family.

It is found in the cytoplasm. In terms of biological role, the RecF protein is involved in DNA metabolism; it is required for DNA replication and normal SOS inducibility. RecF binds preferentially to single-stranded, linear DNA. It also seems to bind ATP. The chain is DNA replication and repair protein RecF from Glaesserella parasuis serovar 5 (strain SH0165) (Haemophilus parasuis).